Reading from the N-terminus, the 633-residue chain is Chaperone protein DnaK (633 aa).

The residue at position 198 (Thr-198) is a Phosphothreonine; by autocatalysis.

It belongs to the heat shock protein 70 family.

In terms of biological role, acts as a chaperone. The polypeptide is Chaperone protein DnaK (Rhodopseudomonas palustris (strain HaA2)).